The chain runs to 791 residues: ABC multidrug transporter mdr2 (791 aa).

Asn147 carries an N-linked (GlcNAc...) asparagine glycan. The next 2 helical transmembrane spans lie at 182–202 and 220–240; these read ALAF…PFSI and LFGL…TLGA. The 290-residue stretch at 182 to 471 folds into the ABC transmembrane type-1 domain; it reads ALAFLFLLVS…LSSFYSELMK (290 aa). N-linked (GlcNAc...) asparagine glycosylation occurs at Asn303. 2 consecutive transmembrane segments (helical) span residues 307 to 324 and 326 to 346; these read GLRA…MAYV and LKLS…AFFY. Residues Asn352 and Asn421 are each glycosylated (N-linked (GlcNAc...) asparagine). 2 consecutive transmembrane segments (helical) span residues 422–442 and 445–465; these read MTIL…AITI and LTSF…LSSF. An ABC transporter domain is found at 504–741; it reads IRFENVTFSY…PDGAFTKLME (238 aa). N-linked (GlcNAc...) asparagine glycosylation occurs at Asn508. 539–546 is an ATP binding site; it reads GPSGGGKS. Residue Asn692 is glycosylated (N-linked (GlcNAc...) asparagine). Residues 754 to 769 are compositionally biased toward polar residues; the sequence is ANTPANPVAQETSWDL. A disordered region spans residues 754–791; it reads ANTPANPVAQETSWDLQSDDGTEISEDTNIPSEPRTID. Positions 770–779 are enriched in acidic residues; the sequence is QSDDGTEISE.

The protein belongs to the ABC transporter superfamily. ABCB family. Mitochondrial peptide exporter (TC 3.A.1.212) subfamily.

Its subcellular location is the cell membrane. Functionally, pleiotropic ABC efflux transporter that may be involved in A.fumigatus adaptation to azoles. The polypeptide is ABC multidrug transporter mdr2 (Aspergillus fumigatus (strain ATCC MYA-4609 / CBS 101355 / FGSC A1100 / Af293) (Neosartorya fumigata)).